A 320-amino-acid chain; its full sequence is L-lactate dehydrogenase (320 aa).

NAD(+) contacts are provided by residues F15–V16, D37, K42, Y68, and G82–A83. Substrate contacts are provided by residues Q85, R91, and N123 to D126. NAD(+) contacts are provided by residues A121–N123 and S146. D151–R154 serves as a coordination point for substrate. Beta-D-fructose 1,6-bisphosphate contacts are provided by residues R156 and Q168–A172. Residue H178 is the Proton acceptor of the active site. Position 223 is a phosphotyrosine (Y223). Position 232 (T232) interacts with substrate.

It belongs to the LDH/MDH superfamily. LDH family. In terms of assembly, homotetramer.

It is found in the cytoplasm. The enzyme catalyses (S)-lactate + NAD(+) = pyruvate + NADH + H(+). It participates in fermentation; pyruvate fermentation to lactate; (S)-lactate from pyruvate: step 1/1. With respect to regulation, allosterically activated by fructose 1,6-bisphosphate (FBP). Catalyzes the conversion of lactate to pyruvate. This chain is L-lactate dehydrogenase, found in Bacillus subtilis (strain 168).